A 1286-amino-acid polypeptide reads, in one-letter code: CLIP-associating protein 2 (1286 aa).

Positions Met1 to Thr40 are golgi localization. 2 positions are modified to phosphoserine: Ser14 and Ser20. Residues Asp17–Gly67 form a disordered region. Positions Ser53–Gly67 are enriched in gly residues. Positions Gly66–Ser317 are TOG 1. HEAT repeat units lie at residues His179–Thr214, His215–Thr251, and Arg256–Gly293. Positions Val320–Ser374 are disordered. Phosphoserine is present on residues Ser322, Ser333, and Ser336. Positions Ser322–Pro340 are enriched in low complexity. Residues Phe341 to Thr352 are compositionally biased toward polar residues. Residues Ser374, Ser376, and Ser413 each carry the phosphoserine modification. The tract at residues Tyr411–Val473 is disordered. The segment covering Thr417–Val431 has biased composition (basic and acidic residues). An interaction with microtubules, MAPRE1 and MAPRE3 region spans residues Arg450–Ser565. Over residues Ser459–Val473 the composition is skewed to low complexity. Ser461, Ser465, Ser469, Ser484, and Ser495 each carry phosphoserine. The disordered stretch occupies residues Ser493–Ser564. Positions Ser500–Pro503 match the SXIP motif 1; mediates interaction with MAPRE1 and targeting to microtubule plus ends motif. The residue at position 513 (Ser513) is a Phosphoserine. Residues Ser523–Pro526 carry the SXIP motif 2; mediates interaction with MAPRE1 and targeting to microtubule plus ends motif. Residues Ser531, Ser535, Ser570, Ser572, Ser581, Ser614, and Ser620 each carry the phosphoserine modification. Basic and acidic residues predominate over residues Arg605–Asp616. The segment at Arg605–Ile638 is disordered. Over residues Ser620 to Arg634 the composition is skewed to low complexity. The tract at residues Met642–Asn873 is TOG 2. HEAT repeat units follow at residues Lys702–Ala739 and Leu764–Pro801. Position 779 is a phosphothreonine (Thr779). An interaction with RSN and localization to the Golgi and kinetochores region spans residues Thr864–Ser1286. Disordered stretches follow at residues His870–Asp920 and Ser944–Ala989. 2 stretches are compositionally biased toward polar residues: residues Arg872–Ser884 and Ser893–Pro914. Ser884 is modified (phosphoserine). Phosphoserine is present on residues Ser944, Ser947, Ser1005, and Ser1021. Residues Ser947 to Gly964 are compositionally biased toward basic and acidic residues. Residues Arg1009 to Ser1286 form a required for cortical localization region. HEAT repeat units lie at residues Leu1046 to Glu1083, Glu1090 to Ala1127, and Met1208 to Asp1245.

It belongs to the CLASP family. In terms of assembly, interacts with microtubules. Interacts with MAPRE1; probably required for targeting to growing microtubule plus ends. Interacts with ERC1, MAPRE3 and PHLDB2. The interaction with ERC1 may be mediated by PHLDB2. Interacts with GCC2; recruits CLASP2 to Golgi membranes. Interacts with CLIP2 and RSN. Interacts with MACF1. Interacts with mtcl2. Interacts with MTCL1. Phosphorylated by GSK3B. Phosphorylation by GSK3B may negatively regulate binding to microtubule lattices in lamella. Isoform 2 is phosphorylated on Ser-241. In terms of tissue distribution, highly expressed in brain and at low levels in heart, kidney and lung.

It is found in the cytoplasm. Its subcellular location is the cytoskeleton. The protein resides in the microtubule organizing center. The protein localises to the centrosome. It localises to the chromosome. It is found in the centromere. Its subcellular location is the kinetochore. The protein resides in the spindle. The protein localises to the spindle pole. It localises to the golgi apparatus. It is found in the trans-Golgi network. Its subcellular location is the cell membrane. The protein resides in the cell projection. The protein localises to the ruffle membrane. It localises to the cell cortex. In terms of biological role, microtubule plus-end tracking protein that promotes the stabilization of dynamic microtubules. Involved in the nucleation of noncentrosomal microtubules originating from the trans-Golgi network (TGN). Required for the polarization of the cytoplasmic microtubule arrays in migrating cells towards the leading edge of the cell. May act at the cell cortex to enhance the frequency of rescue of depolymerizing microtubules by attaching their plus-ends to cortical platforms composed of ERC1 and PHLDB2. This cortical microtubule stabilizing activity is regulated at least in part by phosphatidylinositol 3-kinase signaling. Also performs a similar stabilizing function at the kinetochore which is essential for the bipolar alignment of chromosomes on the mitotic spindle. Acts as a mediator of ERBB2-dependent stabilization of microtubules at the cell cortex. The chain is CLIP-associating protein 2 (Clasp2) from Mus musculus (Mouse).